Reading from the N-terminus, the 384-residue chain is MARDYYGLLGVARNATDQEIKRAYRKLARELHPDVNPDEAAQARFKEVSTAYEVLSDPEKRRIVDMGGDPLESGGGAGGFSGAGFGGLGDVFEAFFGGMSGAGGGQRKPRGRVQPGADSLLRTRLSLAECAVGVTKHLTVDTAVLCDACHGSGTHGNSKPVRCETCGGAGEVQSVQRSFLGQVLTSRPCPTCRGAGETIPDPCHKCGGDGRVRARREIAAPIPAGVANGMRVRLAAQGEVGPGGGPPGDLYVEIVEQPHDVFVRDGDDLHCTIRVPMVDAALGTTVVIDTILDGPTELTIPPGTQPGEVSVLRGHGMPKLRSGVRGDLLAHLDIVIPTKLDGKQTELLRKYKALRDRDRAEVMSAQSEHNSGLFARLRASFSGR.

One can recognise a J domain in the interval 4–68; it reads DYYGLLGVAR…EKRRIVDMGG (65 aa). Residues 133 to 215 form a CR-type zinc finger; the sequence is GVTKHLTVDT…CGGDGRVRAR (83 aa). 8 residues coordinate Zn(2+): cysteine 146, cysteine 149, cysteine 163, cysteine 166, cysteine 189, cysteine 192, cysteine 203, and cysteine 206. CXXCXGXG motif repeat units lie at residues 146 to 153, 163 to 170, 189 to 196, and 203 to 210; these read CDACHGSG, CETCGGAG, CPTCRGAG, and CHKCGGDG.

Belongs to the DnaJ family. Homodimer. Zn(2+) serves as cofactor.

It is found in the cytoplasm. Functionally, participates actively in the response to hyperosmotic and heat shock by preventing the aggregation of stress-denatured proteins and by disaggregating proteins, also in an autonomous, DnaK-independent fashion. Unfolded proteins bind initially to DnaJ; upon interaction with the DnaJ-bound protein, DnaK hydrolyzes its bound ATP, resulting in the formation of a stable complex. GrpE releases ADP from DnaK; ATP binding to DnaK triggers the release of the substrate protein, thus completing the reaction cycle. Several rounds of ATP-dependent interactions between DnaJ, DnaK and GrpE are required for fully efficient folding. Also involved, together with DnaK and GrpE, in the DNA replication of plasmids through activation of initiation proteins. The polypeptide is Chaperone protein DnaJ 1 (Nocardia farcinica (strain IFM 10152)).